Consider the following 952-residue polypeptide: Ubiquitin carboxyl-terminal hydrolase 15 (952 aa).

Alanine 2 carries the N-acetylalanine modification. Residues 2–223 form a mediates interaction with SART3 region; the sequence is AEGGAADLDI…KNEDGTWPRG (222 aa). The DUSP domain maps to 7 to 118; it reads ADLDIQRSDI…GQEPIARKVV (112 aa). At threonine 226 the chain carries Phosphothreonine. Positions 260–904 constitute a USP domain; the sequence is CGLSNLGNTC…AAYVLFYQRQ (645 aa). Catalysis depends on cysteine 269, which acts as the Nucleophile. Threonine 573 carries the phosphothreonine modification. Residues 598-666 are disordered; the sequence is TEGSLHCCKD…GDNDSENGLC (69 aa). A compositionally biased stretch (acidic residues) spans 627 to 644; it reads METDEPDDESSQDQELPS. Histidine 862 functions as the Proton acceptor in the catalytic mechanism. Residues 923–952 are disordered; that stretch reads SAATGIPLESDEDSNDNDNDIENENCMHTN. Residues 931–945 are compositionally biased toward acidic residues; that stretch reads ESDEDSNDNDNDIEN. Residues serine 932 and serine 936 each carry the phosphoserine modification.

The protein belongs to the peptidase C19 family. In terms of assembly, a homodimer structure has been reported; however it is unclear whether the protein form a homodimer in vivo. Identified in a complex with the COP9 signalosome complex (CSN). Interacts with SMAD1, SMAD2 and SMAD3; the interaction is direct. Forms a complex with SMURF2 and SMAD7. Interacts with TGFBR1. Interacts with SART3; the interaction is direct. May interact with RNF20 and RNF40. May interact with PRKN. Interacts with INCA1. Phosphorylated. Phosphorylation protects against ubiquitination and subsequent degradation by the proteasome. In terms of processing, ubiquitinated, leading to degradation by the proteasome.

It is found in the cytoplasm. It localises to the nucleus. The protein localises to the mitochondrion. The catalysed reaction is Thiol-dependent hydrolysis of ester, thioester, amide, peptide and isopeptide bonds formed by the C-terminal Gly of ubiquitin (a 76-residue protein attached to proteins as an intracellular targeting signal).. Functionally, hydrolase that removes conjugated ubiquitin from target proteins and regulates various pathways such as the TGF-beta receptor signaling, NF-kappa-B and RNF41/NRDP1-PRKN pathways. Acts as a key regulator of TGF-beta receptor signaling pathway, but the precise mechanism is still unclear: according to a report, acts by promoting deubiquitination of monoubiquitinated R-SMADs (SMAD1, SMAD2 and/or SMAD3), thereby alleviating inhibition of R-SMADs and promoting activation of TGF-beta target genes. According to another reports, regulates the TGF-beta receptor signaling pathway by mediating deubiquitination and stabilization of TGFBR1, leading to an enhanced TGF-beta signal. Able to mediate deubiquitination of monoubiquitinated substrates, 'Lys-27'-, 'Lys-48'- and 'Lys-63'-linked polyubiquitin chains. May also regulate gene expression and/or DNA repair through the deubiquitination of histone H2B. Acts as an inhibitor of mitophagy by counteracting the action of parkin (PRKN): hydrolyzes cleavage of 'Lys-48'- and 'Lys-63'-linked polyubiquitin chains attached by parkin on target proteins such as MFN2, thereby reducing parkin's ability to drive mitophagy. Acts as an associated component of COP9 signalosome complex (CSN) and regulates different pathways via this association: regulates NF-kappa-B by mediating deubiquitination of NFKBIA and deubiquitinates substrates bound to VCP. Involved in endosome organization by mediating deubiquitination of SQSTM1: ubiquitinated SQSTM1 forms a molecular bridge that restrains cognate vesicles in the perinuclear region and its deubiquitination releases target vesicles for fast transport into the cell periphery. Acts as a negative regulator of antifungal immunity by mediating 'Lys-27'-linked deubiquitination of CARD9, thereby inactivating CARD9. In Bos taurus (Bovine), this protein is Ubiquitin carboxyl-terminal hydrolase 15 (USP15).